The chain runs to 360 residues: Phospho-N-acetylmuramoyl-pentapeptide-transferase (360 aa).

The next 10 helical transmembrane spans lie at 27–47 (GAFM…INVL), 71–91 (TPTM…LLWA), 93–113 (WDNP…LIGF), 134–154 (LALG…NHPA), 168–188 (TLIN…VGSA), 199–219 (GLAI…AYAV), 239–259 (ILIF…YNAP), 262–282 (AVFM…AIAV), 288–308 (LVLA…IIQV), and 337–357 (TIVI…LATL).

Belongs to the glycosyltransferase 4 family. MraY subfamily. Mg(2+) serves as cofactor.

It localises to the cell inner membrane. It catalyses the reaction UDP-N-acetyl-alpha-D-muramoyl-L-alanyl-gamma-D-glutamyl-meso-2,6-diaminopimeloyl-D-alanyl-D-alanine + di-trans,octa-cis-undecaprenyl phosphate = di-trans,octa-cis-undecaprenyl diphospho-N-acetyl-alpha-D-muramoyl-L-alanyl-D-glutamyl-meso-2,6-diaminopimeloyl-D-alanyl-D-alanine + UMP. It functions in the pathway cell wall biogenesis; peptidoglycan biosynthesis. Functionally, catalyzes the initial step of the lipid cycle reactions in the biosynthesis of the cell wall peptidoglycan: transfers peptidoglycan precursor phospho-MurNAc-pentapeptide from UDP-MurNAc-pentapeptide onto the lipid carrier undecaprenyl phosphate, yielding undecaprenyl-pyrophosphoryl-MurNAc-pentapeptide, known as lipid I. The sequence is that of Phospho-N-acetylmuramoyl-pentapeptide-transferase from Ruegeria pomeroyi (strain ATCC 700808 / DSM 15171 / DSS-3) (Silicibacter pomeroyi).